The primary structure comprises 133 residues: Fatty acid-binding protein, heart (133 aa).

V2 bears the N-acetylvaline mark. T8 is modified (phosphothreonine). Residue Y20 is modified to Phosphotyrosine; by Tyr-kinases. S23 carries the phosphoserine modification. The residue at position 30 (T30) is a Phosphothreonine. S83 is modified (phosphoserine). 127 to 129 lines the (9Z)-octadecenoate pocket; the sequence is RTY. A hexadecanoate-binding site is contributed by 127-129; the sequence is RTY. 127–129 provides a ligand contact to octadecanoate; sequence RTY.

Belongs to the calycin superfamily. Fatty-acid binding protein (FABP) family.

Its subcellular location is the cytoplasm. In terms of biological role, FABPs are thought to play a role in the intracellular transport of long-chain fatty acids and their acyl-CoA esters. In Homo sapiens (Human), this protein is Fatty acid-binding protein, heart (FABP3).